The sequence spans 236 residues: Snake venom serine protease ussurin (236 aa).

A Peptidase S1 domain is found at 1 to 227; the sequence is VIGGVECNIN…YTDWIQSIIS (227 aa). C28 and C44 are disulfide-bonded. Catalysis depends on charge relay system residues H43 and D88. N99 and N100 each carry an N-linked (GlcNAc...) asparagine glycan. 3 cysteine pairs are disulfide-bonded: C120/C188, C152/C167, and C178/C203. S182 serves as the catalytic Charge relay system.

This sequence belongs to the peptidase S1 family. Snake venom subfamily. In terms of assembly, monomer. In terms of tissue distribution, expressed by the venom gland.

The protein resides in the secreted. In terms of biological role, snake venom serine protease that may act in the hemostasis system of the prey. The chain is Snake venom serine protease ussurin from Gloydius ussuriensis (Ussuri mamushi).